The sequence spans 185 residues: Elongation factor P (185 aa).

It belongs to the elongation factor P family.

It localises to the cytoplasm. It participates in protein biosynthesis; polypeptide chain elongation. Its function is as follows. Involved in peptide bond synthesis. Stimulates efficient translation and peptide-bond synthesis on native or reconstituted 70S ribosomes in vitro. Probably functions indirectly by altering the affinity of the ribosome for aminoacyl-tRNA, thus increasing their reactivity as acceptors for peptidyl transferase. This chain is Elongation factor P, found in Syntrophomonas wolfei subsp. wolfei (strain DSM 2245B / Goettingen).